The chain runs to 190 residues: Ribose 1,5-bisphosphate phosphokinase PhnN (190 aa).

Position 11-18 (11-18 (GPSGSGKD)) interacts with ATP.

The protein belongs to the ribose 1,5-bisphosphokinase family.

The catalysed reaction is alpha-D-ribose 1,5-bisphosphate + ATP = 5-phospho-alpha-D-ribose 1-diphosphate + ADP. Its pathway is metabolic intermediate biosynthesis; 5-phospho-alpha-D-ribose 1-diphosphate biosynthesis; 5-phospho-alpha-D-ribose 1-diphosphate from D-ribose 5-phosphate (route II): step 3/3. Its function is as follows. Catalyzes the phosphorylation of ribose 1,5-bisphosphate to 5-phospho-D-ribosyl alpha-1-diphosphate (PRPP). The chain is Ribose 1,5-bisphosphate phosphokinase PhnN from Thiobacillus denitrificans (strain ATCC 25259 / T1).